We begin with the raw amino-acid sequence, 218 residues long: uncharacterized protein (218 aa).

The next 5 membrane-spanning stretches (helical) occupy residues 19-39 (VFGFSEFSIIGFITAVIFTII), 92-112 (FDYALFLTLVGIANIGIVSAV), 124-144 (YGLIAMIATLPLFGSAGMILA), 161-181 (LLFEKIIFAAGMAGETGIAPF), and 196-216 (YILMIHLSSLLLIVRTVEILL).

The protein resides in the cell membrane. This is an uncharacterized protein from Methanocaldococcus jannaschii (strain ATCC 43067 / DSM 2661 / JAL-1 / JCM 10045 / NBRC 100440) (Methanococcus jannaschii).